Consider the following 179-residue polypeptide: Large ribosomal subunit protein uL6 (179 aa).

It belongs to the universal ribosomal protein uL6 family. Part of the 50S ribosomal subunit.

Its function is as follows. This protein binds to the 23S rRNA, and is important in its secondary structure. It is located near the subunit interface in the base of the L7/L12 stalk, and near the tRNA binding site of the peptidyltransferase center. This Nocardioides sp. (strain ATCC BAA-499 / JS614) protein is Large ribosomal subunit protein uL6.